A 258-amino-acid polypeptide reads, in one-letter code: Ribonuclease HII (258 aa).

Residues 71–258 form the RNase H type-2 domain; the sequence is QLIAGIDEVG…PIKTMVNFKS (188 aa). The a divalent metal cation site is built by D77, E78, and D169.

The protein belongs to the RNase HII family. Mn(2+) is required as a cofactor. It depends on Mg(2+) as a cofactor.

Its subcellular location is the cytoplasm. The catalysed reaction is Endonucleolytic cleavage to 5'-phosphomonoester.. Its function is as follows. Endonuclease that specifically degrades the RNA of RNA-DNA hybrids. The polypeptide is Ribonuclease HII (rnhB) (Lactococcus lactis subsp. lactis (strain IL1403) (Streptococcus lactis)).